Consider the following 392-residue polypeptide: Putative RNA-binding protein Luc7-like 2 (392 aa).

A Phosphoserine modification is found at serine 18. Residues glutamate 102–methionine 177 are a coiled coil. Residues lysine 235–lysine 257 are compositionally biased toward basic and acidic residues. Residues lysine 235 to isoleucine 392 form a disordered region. The span at leucine 258 to histidine 321 shows a compositional bias: basic residues. A 5-hydroxylysine; by JMJD6 mark is found at lysine 266 and lysine 269. Composition is skewed to basic and acidic residues over residues lysine 337 to arginine 364 and arginine 377 to isoleucine 392.

It belongs to the Luc7 family. As to quaternary structure, interacts with SCNM1. All isoforms are expressed in brain, kidney, heart, thymus, stomach, skeletal muscle, testis and spinal cord.

It is found in the nucleus speckle. It localises to the nucleus. Its subcellular location is the nucleoplasm. Functionally, may bind to RNA via its Arg/Ser-rich domain. This chain is Putative RNA-binding protein Luc7-like 2 (Luc7l2), found in Mus musculus (Mouse).